We begin with the raw amino-acid sequence, 173 residues long: Large ribosomal subunit protein uL10 (173 aa).

Belongs to the universal ribosomal protein uL10 family. Part of the ribosomal stalk of the 50S ribosomal subunit. The N-terminus interacts with L11 and the large rRNA to form the base of the stalk. The C-terminus forms an elongated spine to which L12 dimers bind in a sequential fashion forming a multimeric L10(L12)X complex.

Its function is as follows. Forms part of the ribosomal stalk, playing a central role in the interaction of the ribosome with GTP-bound translation factors. This is Large ribosomal subunit protein uL10 from Cupriavidus necator (strain ATCC 17699 / DSM 428 / KCTC 22496 / NCIMB 10442 / H16 / Stanier 337) (Ralstonia eutropha).